Reading from the N-terminus, the 68-residue chain is Antimicrobial peptide UyCT3 (68 aa).

A signal peptide spans 1–23; that stretch reads MKNQFVLLLLAIVFLQMIFQSDA. The residue at position 36 (Phe36) is a Phenylalanine amide. Residues 40-68 constitute a propeptide that is removed on maturation; the sequence is GLENMDKFDELFDGDLSEADLDFLKELMR.

It belongs to the non-disulfide-bridged peptide (NDBP) superfamily. Short antimicrobial peptide (group 4) family. Post-translationally, the non-amidated UyCT3 does not show antimicrobial activity. As to expression, expressed by the venom gland.

It is found in the secreted. Its subcellular location is the target cell membrane. In terms of biological role, antimicrobial peptide that inhibits the growth of Gram-positive (S.aureus, MIC=10 uM) and Gram-negative bacteria (E.coli, MIC=15 uM and P.aeruginosa, MIC=6 uM). It also shows 35% of hemolysis when 15 uM are tested (95% at 50 uM). The protein is Antimicrobial peptide UyCT3 of Urodacus yaschenkoi (Inland robust scorpion).